Consider the following 692-residue polypeptide: Putative clathrin assembly protein At1g14910 (692 aa).

Residues 24 to 161 (RVNSDYAELD…ECFRVLKYDI (138 aa)) form the ENTH domain. A disordered region spans residues 325–383 (YTPDDGLTSEDVGPSHEEHETSSPSDSAVVPSEETQLSSQSPPSVETPQNFIDTDDLLG). The span at 357 to 376 (EETQLSSQSPPSVETPQNFI) shows a compositional bias: polar residues. Position 363 is a phosphoserine (Ser-363). The stretch at 532-548 (FGEFPIVPVSEPQSTTS) is repeat 1. The 8 X 17 AA approximate tandem repeats stretch occupies residues 532–666 (FGEFPIVPVS…PVSEPQNTTG (135 aa)). Residues 549–564 (FGAFPVPVSEPSNTTG) form a 2; truncated repeat. 6 repeat units span residues 565–581 (FGEI…NTTA), 582–598 (FGEF…NITG), 599–615 (FGAL…NTTG), 616–632 (FGEF…NTTG), 633–649 (FGAL…KTTG), and 650–666 (LGEF…NTTG).

As to expression, expressed in the whole plant.

It is found in the membrane. The protein localises to the clathrin-coated pit. It localises to the golgi apparatus. The protein resides in the cytoplasmic vesicle. Its subcellular location is the clathrin-coated vesicle. This is Putative clathrin assembly protein At1g14910 from Arabidopsis thaliana (Mouse-ear cress).